The chain runs to 532 residues: All-trans-retinyl ester 13-cis isomerohydrolase (532 aa).

Residue cysteine 112 is the site of S-palmitoyl cysteine; in membrane form attachment. 3 residues coordinate Fe cation: histidine 180, histidine 241, and histidine 313. A lipid anchor (S-palmitoyl cysteine; in membrane form) is attached at cysteine 329. Histidine 527 is a binding site for Fe cation.

Belongs to the carotenoid oxygenase family. Fe(2+) serves as cofactor. In terms of processing, palmitoylated. Predominantly expressed in brain. Expressed at a low level in the eye.

The protein localises to the cytoplasm. The protein resides in the cell membrane. It catalyses the reaction an all-trans-retinyl ester + H2O = 13-cis-retinol + a fatty acid + H(+). The enzyme catalyses lutein = (3R,3'S)-zeaxanthin. In terms of biological role, specifically generates 13-cis retinol, a stereoisomeric form of retinoic acid. Capable of catalyzing the isomerization of lutein to meso-zeaxanthin an eye-specific carotenoid. The polypeptide is All-trans-retinyl ester 13-cis isomerohydrolase (rpe65b) (Danio rerio (Zebrafish)).